The sequence spans 197 residues: ATP-dependent Clp protease proteolytic subunit (197 aa).

Ser98 acts as the Nucleophile in catalysis. The active site involves His123.

Belongs to the peptidase S14 family. In terms of assembly, fourteen ClpP subunits assemble into 2 heptameric rings which stack back to back to give a disk-like structure with a central cavity, resembling the structure of eukaryotic proteasomes.

Its subcellular location is the cytoplasm. The enzyme catalyses Hydrolysis of proteins to small peptides in the presence of ATP and magnesium. alpha-casein is the usual test substrate. In the absence of ATP, only oligopeptides shorter than five residues are hydrolyzed (such as succinyl-Leu-Tyr-|-NHMec, and Leu-Tyr-Leu-|-Tyr-Trp, in which cleavage of the -Tyr-|-Leu- and -Tyr-|-Trp bonds also occurs).. Cleaves peptides in various proteins in a process that requires ATP hydrolysis. Has a chymotrypsin-like activity. Plays a major role in the degradation of misfolded proteins. This Ligilactobacillus salivarius (strain UCC118) (Lactobacillus salivarius) protein is ATP-dependent Clp protease proteolytic subunit.